The sequence spans 440 residues: Xylose isomerase (440 aa).

Active-site residues include His-100 and Asp-103. Mg(2+) is bound by residues Glu-231, Glu-267, His-270, Asp-295, Asp-306, Asp-308, and Asp-338.

This sequence belongs to the xylose isomerase family. As to quaternary structure, homotetramer. The cofactor is Mg(2+).

It localises to the cytoplasm. It catalyses the reaction alpha-D-xylose = alpha-D-xylulofuranose. The chain is Xylose isomerase from Burkholderia vietnamiensis (strain G4 / LMG 22486) (Burkholderia cepacia (strain R1808)).